The following is a 333-amino-acid chain: UDP-N-acetylenolpyruvoylglucosamine reductase (333 aa).

The region spanning L12–D176 is the FAD-binding PCMH-type domain. Residue R153 is part of the active site. Residue S221 is the Proton donor of the active site. E317 is a catalytic residue.

This sequence belongs to the MurB family. Requires FAD as cofactor.

It is found in the cytoplasm. The catalysed reaction is UDP-N-acetyl-alpha-D-muramate + NADP(+) = UDP-N-acetyl-3-O-(1-carboxyvinyl)-alpha-D-glucosamine + NADPH + H(+). Its pathway is cell wall biogenesis; peptidoglycan biosynthesis. Its function is as follows. Cell wall formation. This is UDP-N-acetylenolpyruvoylglucosamine reductase from Idiomarina loihiensis (strain ATCC BAA-735 / DSM 15497 / L2-TR).